A 338-amino-acid polypeptide reads, in one-letter code: Glycerol-3-phosphate dehydrogenase [NAD(P)+] (338 aa).

NADPH is bound by residues S14, Y15, H35, and K109. K109, G138, and T140 together coordinate sn-glycerol 3-phosphate. Residue A142 coordinates NADPH. Residues K194, D247, S257, R258, and N259 each contribute to the sn-glycerol 3-phosphate site. The active-site Proton acceptor is the K194. NADPH is bound at residue R258. NADPH-binding residues include V282 and E284.

The protein belongs to the NAD-dependent glycerol-3-phosphate dehydrogenase family.

It localises to the cytoplasm. The enzyme catalyses sn-glycerol 3-phosphate + NAD(+) = dihydroxyacetone phosphate + NADH + H(+). The catalysed reaction is sn-glycerol 3-phosphate + NADP(+) = dihydroxyacetone phosphate + NADPH + H(+). Its pathway is membrane lipid metabolism; glycerophospholipid metabolism. Functionally, catalyzes the reduction of the glycolytic intermediate dihydroxyacetone phosphate (DHAP) to sn-glycerol 3-phosphate (G3P), the key precursor for phospholipid synthesis. The protein is Glycerol-3-phosphate dehydrogenase [NAD(P)+] of Shewanella putrefaciens (strain CN-32 / ATCC BAA-453).